We begin with the raw amino-acid sequence, 154 residues long: Small ribosomal subunit protein bS16 (154 aa).

Positions 82-154 (VQERAARSNP…EAAAEESTEA (73 aa)) are disordered. The span at 92–109 (KKAEPGEKAKERAEERAA) shows a compositional bias: basic and acidic residues. Positions 110 to 129 (KLAAAEEAANAPAEEPAAEP) are enriched in low complexity. Acidic residues predominate over residues 142–154 (PAEEAAAEESTEA).

The protein belongs to the bacterial ribosomal protein bS16 family.

The polypeptide is Small ribosomal subunit protein bS16 (Rhizorhabdus wittichii (strain DSM 6014 / CCUG 31198 / JCM 15750 / NBRC 105917 / EY 4224 / RW1) (Sphingomonas wittichii)).